We begin with the raw amino-acid sequence, 194 residues long: Fe/S biogenesis protein NfuA (194 aa).

Residues C152 and C155 each coordinate [4Fe-4S] cluster.

Belongs to the NfuA family. In terms of assembly, homodimer. It depends on [4Fe-4S] cluster as a cofactor.

Its function is as follows. Involved in iron-sulfur cluster biogenesis. Binds a 4Fe-4S cluster, can transfer this cluster to apoproteins, and thereby intervenes in the maturation of Fe/S proteins. Could also act as a scaffold/chaperone for damaged Fe/S proteins. The polypeptide is Fe/S biogenesis protein NfuA (Teredinibacter turnerae (strain ATCC 39867 / T7901)).